A 416-amino-acid polypeptide reads, in one-letter code: Serine hydroxymethyltransferase (416 aa).

(6S)-5,6,7,8-tetrahydrofolate is bound by residues Leu121 and 125-127 (GHL). Lys229 bears the N6-(pyridoxal phosphate)lysine mark.

It belongs to the SHMT family. As to quaternary structure, homodimer. It depends on pyridoxal 5'-phosphate as a cofactor.

It is found in the cytoplasm. The enzyme catalyses (6R)-5,10-methylene-5,6,7,8-tetrahydrofolate + glycine + H2O = (6S)-5,6,7,8-tetrahydrofolate + L-serine. Its pathway is one-carbon metabolism; tetrahydrofolate interconversion. The protein operates within amino-acid biosynthesis; glycine biosynthesis; glycine from L-serine: step 1/1. In terms of biological role, catalyzes the reversible interconversion of serine and glycine with tetrahydrofolate (THF) serving as the one-carbon carrier. This reaction serves as the major source of one-carbon groups required for the biosynthesis of purines, thymidylate, methionine, and other important biomolecules. Also exhibits THF-independent aldolase activity toward beta-hydroxyamino acids, producing glycine and aldehydes, via a retro-aldol mechanism. This Neisseria gonorrhoeae (strain ATCC 700825 / FA 1090) protein is Serine hydroxymethyltransferase.